The following is a 458-amino-acid chain: 5'-adenylylsulfate reductase 3, chloroplastic (458 aa).

Residues 1–24 form a disordered region; the sequence is MALAINVSSSSSSAISSSSFPSSD. Residues 1 to 69 constitute a chloroplast transit peptide; that stretch reads MALAINVSSS…VQSITKESIV (69 aa). Over residues 8 to 23 the composition is skewed to low complexity; sequence SSSSSSAISSSSFPSS. Residues 70 to 319 are reductase domain; the sequence is ASEVTEKLDV…KAKECGLHKG (250 aa). In terms of domain architecture, Thioredoxin spans 337 to 458; that stretch reads ASVADIFNSE…SLTSFLNLVR (122 aa). Catalysis depends on nucleophile residues Cys378 and Cys381. The cysteines at positions 378 and 381 are disulfide-linked.

The protein belongs to the APS reductase family. [4Fe-4S] cluster serves as cofactor. As to expression, leaves, roots and stem.

The protein localises to the plastid. Its subcellular location is the chloroplast. The catalysed reaction is glutathione disulfide + sulfite + AMP + 2 H(+) = adenosine 5'-phosphosulfate + 2 glutathione. Stimulated by sodium sulfate &gt; ammonium sulfate. In terms of biological role, reduces sulfate for Cys biosynthesis. Substrate preference is adenosine-5'-phosphosulfate (APS) &gt;&gt; 3'-phosphoadenosine-5'-phosphosulfate (PAPS). Uses glutathione or DTT as source of protons. This chain is 5'-adenylylsulfate reductase 3, chloroplastic (APR3), found in Arabidopsis thaliana (Mouse-ear cress).